The chain runs to 409 residues: Lissencephaly-1 homolog (409 aa).

One can recognise a LisH domain in the interval 7-39 (QREELNQAIADYLGTNGYADSLEAFRKEADLST). A coiled-coil region spans residues 54-81 (TSVIRLQKKVMELEAKLTEAEKEVIEGA). WD repeat units lie at residues 104–145 (GHRA…RSLK), 146–185 (GHTD…ACVK), 189–228 (GHDH…CVKT), 231–270 (GHRE…CKVE), 273–332 (DHEH…CLLT), 335–374 (GHDN…CMKT), and 377–409 (AHQH…WECR).

The protein belongs to the WD repeat LIS1/nudF family.

The protein resides in the cytoplasm. Its subcellular location is the cytoskeleton. The protein localises to the microtubule organizing center. It localises to the centrosome. In terms of biological role, positively regulates the activity of the minus-end directed microtubule motor protein dynein. May enhance dynein-mediated microtubule sliding by targeting dynein to the microtubule plus end. Required for several dynein- and microtubule-dependent processes. The protein is Lissencephaly-1 homolog of Drosophila willistoni (Fruit fly).